Here is a 114-residue protein sequence, read N- to C-terminus: Large ribosomal subunit protein uL22 (114 aa).

It belongs to the universal ribosomal protein uL22 family. Part of the 50S ribosomal subunit.

Its function is as follows. This protein binds specifically to 23S rRNA; its binding is stimulated by other ribosomal proteins, e.g. L4, L17, and L20. It is important during the early stages of 50S assembly. It makes multiple contacts with different domains of the 23S rRNA in the assembled 50S subunit and ribosome. Functionally, the globular domain of the protein is located near the polypeptide exit tunnel on the outside of the subunit, while an extended beta-hairpin is found that lines the wall of the exit tunnel in the center of the 70S ribosome. This is Large ribosomal subunit protein uL22 from Streptococcus pyogenes serotype M5 (strain Manfredo).